The following is a 300-amino-acid chain: GTPase Era (300 aa).

The region spanning 8-176 (RCGYVAIVGR…ERLVAGRLPQ (169 aa)) is the Era-type G domain. The G1 stretch occupies residues 16 to 23 (GRPNVGKS). 16 to 23 (GRPNVGKS) is a binding site for GTP. The segment at 42-46 (QTTRH) is G2. Positions 63–66 (DTPG) are G3. GTP-binding positions include 63-67 (DTPGL) and 125-128 (NKAD). Residues 125-128 (NKAD) form a G4 region. The G5 stretch occupies residues 155–157 (ISA). The KH type-2 domain occupies 199 to 283 (VREKIMRQLG…MLNLWVKVKG (85 aa)).

Belongs to the TRAFAC class TrmE-Era-EngA-EngB-Septin-like GTPase superfamily. Era GTPase family. Monomer.

It is found in the cytoplasm. Its subcellular location is the cell inner membrane. Functionally, an essential GTPase that binds both GDP and GTP, with rapid nucleotide exchange. Plays a role in 16S rRNA processing and 30S ribosomal subunit biogenesis and possibly also in cell cycle regulation and energy metabolism. The polypeptide is GTPase Era (Azotobacter vinelandii (strain DJ / ATCC BAA-1303)).